Consider the following 210-residue polypeptide: 23.6 kDa heat shock protein, mitochondrial (210 aa).

The transit peptide at 1–31 (MASALALKRLLSSSIAPRSRSVLRPAVSSRL) directs the protein to the mitochondrion. One can recognise a sHSP domain in the interval 100 to 210 (MGASGARRGW…RNDVRQIEIN (111 aa)). Positions 145 to 165 (GEGKNEEDGGEEGESGNRRFT) are disordered.

Belongs to the small heat shock protein (HSP20) family. As to quaternary structure, may form oligomeric structures.

It localises to the mitochondrion. This is 23.6 kDa heat shock protein, mitochondrial (HSP23.6) from Arabidopsis thaliana (Mouse-ear cress).